The primary structure comprises 296 residues: Phosphatidylglycerol--prolipoprotein diacylglyceryl transferase (296 aa).

The next 4 membrane-spanning stretches (helical) occupy residues 10 to 30 (IAFS…LAAF), 57 to 77 (LLFY…MLFY), 92 to 112 (VWEG…ACGL), and 119 to 139 (LHFF…LGFG). R140 contacts a 1,2-diacyl-sn-glycero-3-phospho-(1'-sn-glycerol). 3 helical membrane-spanning segments follow: residues 194 to 214 (QLYE…TFSM), 220 to 240 (YAVS…VEFV), and 255 to 275 (LTMG…LLAL).

This sequence belongs to the Lgt family.

It is found in the cell inner membrane. It carries out the reaction L-cysteinyl-[prolipoprotein] + a 1,2-diacyl-sn-glycero-3-phospho-(1'-sn-glycerol) = an S-1,2-diacyl-sn-glyceryl-L-cysteinyl-[prolipoprotein] + sn-glycerol 1-phosphate + H(+). It functions in the pathway protein modification; lipoprotein biosynthesis (diacylglyceryl transfer). In terms of biological role, catalyzes the transfer of the diacylglyceryl group from phosphatidylglycerol to the sulfhydryl group of the N-terminal cysteine of a prolipoprotein, the first step in the formation of mature lipoproteins. This Xanthomonas campestris pv. campestris (strain 8004) protein is Phosphatidylglycerol--prolipoprotein diacylglyceryl transferase.